A 301-amino-acid polypeptide reads, in one-letter code: Phosphatidylglycerol--prolipoprotein diacylglyceryl transferase (301 aa).

3 helical membrane passes run 17–37 (LAVRWYGLMYLVAFIAAIVVG), 59–79 (MLFYGVLGTILGGRLGYVLFY), and 97–117 (GGMSFHGGFLGVTLAMVLFAY). R142 is a binding site for a 1,2-diacyl-sn-glycero-3-phospho-(1'-sn-glycerol). 2 helical membrane-spanning segments follow: residues 230 to 250 (MGAISAVFLIGYGLARFTVEF) and 265 to 285 (LSMGQWLSLPMILVGIGLLVW).

It belongs to the Lgt family.

Its subcellular location is the cell inner membrane. It catalyses the reaction L-cysteinyl-[prolipoprotein] + a 1,2-diacyl-sn-glycero-3-phospho-(1'-sn-glycerol) = an S-1,2-diacyl-sn-glyceryl-L-cysteinyl-[prolipoprotein] + sn-glycerol 1-phosphate + H(+). The protein operates within protein modification; lipoprotein biosynthesis (diacylglyceryl transfer). Its function is as follows. Catalyzes the transfer of the diacylglyceryl group from phosphatidylglycerol to the sulfhydryl group of the N-terminal cysteine of a prolipoprotein, the first step in the formation of mature lipoproteins. This Paraburkholderia phytofirmans (strain DSM 17436 / LMG 22146 / PsJN) (Burkholderia phytofirmans) protein is Phosphatidylglycerol--prolipoprotein diacylglyceryl transferase.